Here is a 335-residue protein sequence, read N- to C-terminus: N-acetylmuramoyl-L-alanine amidase sle1 (335 aa).

An N-terminal signal peptide occupies residues 1 to 25; the sequence is MQKKVIAAIIGTSAISAVAATQANA. In terms of domain architecture, LysM 1 spans 27–70; it reads TTHTVKPGESVWAISNKYGISIAKLKSLNNLTSNLIFPNQVLKV. A compositionally biased stretch (low complexity) spans 71-86; the sequence is SGSSNSTSNSSRPSTN. Residues 71–90 form a disordered region; that stretch reads SGSSNSTSNSSRPSTNSGGG. LysM domains are found at residues 91-134 and 158-201; these read SYYT…KLKV. The region spanning 211–335 is the Peptidase C51 domain; that stretch reads ASATTTNRGY…YQVNNYRYIH (125 aa).

It is found in the secreted. The protein localises to the cell surface. It carries out the reaction Hydrolyzes the link between N-acetylmuramoyl residues and L-amino acid residues in certain cell-wall glycopeptides.. Functionally, peptidoglycan hydrolase involved in the splitting of the septum during cell division. This Staphylococcus aureus (strain bovine RF122 / ET3-1) protein is N-acetylmuramoyl-L-alanine amidase sle1 (sle1).